The primary structure comprises 414 residues: Putative transporter AmpG 4 (414 aa).

A run of 12 helical transmembrane segments spans residues 15-35 (IFIL…TLAV), 44-63 (IAVI…KVFW), 84-104 (WLIL…KENP), 109-129 (TSFY…DIAV), 150-170 (VFGY…LAEI), 177-197 (LTFC…ITVN), 230-250 (FAVT…MLGA), 268-288 (IIAK…GGIV), 295-315 (FKGL…FIWL), 324-344 (ALLI…TALV), 360-379 (YALL…IYAG), and 389-409 (GFFL…MYLN).

It belongs to the major facilitator superfamily.

The protein localises to the cell inner membrane. This Rickettsia conorii (strain ATCC VR-613 / Malish 7) protein is Putative transporter AmpG 4 (ampG4).